The chain runs to 269 residues: Formamidopyrimidine-DNA glycosylase (269 aa).

Pro-2 (schiff-base intermediate with DNA) is an active-site residue. Glu-3 functions as the Proton donor in the catalytic mechanism. Catalysis depends on Lys-57, which acts as the Proton donor; for beta-elimination activity. 3 residues coordinate DNA: His-90, Arg-109, and Arg-150. An FPG-type zinc finger spans residues 235–269 (QVYGRAGEACLTCGTTIKRSKHGQRTTFYCPHCQR). Residue Arg-259 is the Proton donor; for delta-elimination activity of the active site.

The protein belongs to the FPG family. In terms of assembly, monomer. Zn(2+) is required as a cofactor.

The enzyme catalyses Hydrolysis of DNA containing ring-opened 7-methylguanine residues, releasing 2,6-diamino-4-hydroxy-5-(N-methyl)formamidopyrimidine.. It catalyses the reaction 2'-deoxyribonucleotide-(2'-deoxyribose 5'-phosphate)-2'-deoxyribonucleotide-DNA = a 3'-end 2'-deoxyribonucleotide-(2,3-dehydro-2,3-deoxyribose 5'-phosphate)-DNA + a 5'-end 5'-phospho-2'-deoxyribonucleoside-DNA + H(+). Involved in base excision repair of DNA damaged by oxidation or by mutagenic agents. Acts as a DNA glycosylase that recognizes and removes damaged bases. Has a preference for oxidized purines, such as 7,8-dihydro-8-oxoguanine (8-oxoG). Has AP (apurinic/apyrimidinic) lyase activity and introduces nicks in the DNA strand. Cleaves the DNA backbone by beta-delta elimination to generate a single-strand break at the site of the removed base with both 3'- and 5'-phosphates. The sequence is that of Formamidopyrimidine-DNA glycosylase from Edwardsiella ictaluri (strain 93-146).